The sequence spans 149 residues: L-alanine exporter AlaE (149 aa).

The next 4 helical transmembrane spans lie at 16–36 (FAMVVYCSVVNMCIEVFLSGM), 46–66 (LVAIPVNILIAWPYGMYRDLF), 85–105 (ILAYVTFQSPVYVAILLVVGA), and 112–132 (AAVSSNIVVSMLMGAVYGYFL).

The protein belongs to the AlaE exporter family.

Its subcellular location is the cell inner membrane. In terms of biological role, exports L-alanine. This chain is L-alanine exporter AlaE, found in Shigella flexneri.